The following is a 111-amino-acid chain: Secreted RxLR effector protein 82 (111 aa).

The first 17 residues, 1–17 (MFHLYLLLVFETRYTCL), serve as a signal peptide directing secretion. The short motif at 28-31 (RWLR) is the RxLR element.

This sequence belongs to the RxLR effector family.

It localises to the secreted. The protein localises to the host nucleus. Its function is as follows. Secreted effector that acts as an elicitor that induces cell death in host plant cells. This Plasmopara viticola (Downy mildew of grapevine) protein is Secreted RxLR effector protein 82.